The chain runs to 212 residues: HTH-type transcriptional regulator RutR (212 aa).

In terms of domain architecture, HTH tetR-type spans serine 17–tryptophan 77. A DNA-binding region (H-T-H motif) is located at residues threonine 39–tyrosine 58.

Homodimer.

Master transcription regulator which represses the degradation of pyrimidines (rutABCDEFG) and purines (gcl operon) for maintenance of metabolic balance between pyrimidines and purines. It also regulates the synthesis of pyrimidine nucleotides and arginine from glutamine (carAB) and the supply of glutamate (gadABWX). This chain is HTH-type transcriptional regulator RutR (rutR), found in Escherichia coli O6:H1 (strain CFT073 / ATCC 700928 / UPEC).